The chain runs to 295 residues: Glycine N-methyltransferase (295 aa).

N-acetylvaline is present on Val2. 2 residues coordinate (6S)-5-methyl-5,6,7,8-tetrahydrofolate: Ser4 and Tyr6. Phosphoserine is present on Ser10. 4 residues coordinate S-adenosyl-L-methionine: Tyr22, Trp31, Tyr34, and Arg41. The residue at position 34 (Tyr34) is a Phosphotyrosine. Lys46 is subject to N6-succinyllysine. S-adenosyl-L-methionine contacts are provided by residues Ala65, 86–88 (DAS), 117–118 (NW), 139–142 (LGNS), and Arg178. N6-succinyllysine is present on residues Lys193, Lys198, and Lys203. His217 lines the (6S)-5-methyl-5,6,7,8-tetrahydrofolate pocket. Tyr223 contacts S-adenosyl-L-methionine. A (6S)-5-methyl-5,6,7,8-tetrahydrofolate-binding site is contributed by Arg242.

It belongs to the class I-like SAM-binding methyltransferase superfamily. Glycine N-methyltransferase family. As to quaternary structure, homotetramer. As to expression, expressed only in liver, pancreas, and prostate.

It localises to the cytoplasm. It carries out the reaction glycine + S-adenosyl-L-methionine = sarcosine + S-adenosyl-L-homocysteine + H(+). Inhibited by 5-methyltetrahydrofolate monoglutamate and by 5-methyltetrahydrofolate pentaglutamate, inhibition is much more effective by the pentaglutamate form than by the monoglutamate form. Two molecules of 5-methyltetrahydrofolate are bound per tetramer. The binding sites are localized between subunits. Inhibitor binding may preclude movements of the polypeptide chain that are necessary for enzyme activity. Catalyzes the methylation of glycine by using S-adenosylmethionine (AdoMet) to form N-methylglycine (sarcosine) with the concomitant production of S-adenosylhomocysteine (AdoHcy), a reaction regulated by the binding of 5-methyltetrahydrofolate. Plays an important role in the regulation of methyl group metabolism by regulating the ratio between S-adenosyl-L-methionine and S-adenosyl-L-homocysteine. In Homo sapiens (Human), this protein is Glycine N-methyltransferase.